The following is a 1488-amino-acid chain: Phenolphthiocerol/phthiocerol polyketide synthase subunit E (1488 aa).

The region spanning 5–438 (ENAIAVVGMA…GTNAHVVLEE (434 aa)) is the Ketosynthase family 3 (KS3) domain. Active-site for beta-ketoacyl synthase activity residues include Cys-184, His-320, and His-361. Residues 551-868 (VFLFPGQGAQ…GELWSAGVEV (318 aa)) form an acyltransferase region. The active-site For malonyltransferase activity is the Ser-641. Residues 930–1004 (NGESQTEVTL…SLTAAVDASF (75 aa)) form the Carrier domain. O-(pantetheine 4'-phosphoryl)serine is present on Ser-965. 1286–1331 (EGVVAVELEGEGRSVLRPDVDLRRTVGWFTTYYPVPLACATGLGAL) is an NADP(+) binding site.

It depends on NADP(+) as a cofactor. Pantetheine 4'-phosphate serves as cofactor.

It carries out the reaction icosanoyl-[(phenol)carboxyphthiodiolenone synthase] + 2 (S)-methylmalonyl-CoA + 3 malonyl-CoA + 5 NADPH + 10 H(+) = C32-carboxyphthiodiolenone-[(phenol)carboxyphthiodiolenone synthase] + 5 CO2 + 5 NADP(+) + 5 CoA + 2 H2O. It catalyses the reaction docosanoyl-[(phenol)carboxyphthiodiolenone synthase] + 2 (S)-methylmalonyl-CoA + 3 malonyl-CoA + 5 NADPH + 10 H(+) = C34-carboxyphthiodiolenone-[(phenol)carboxyphthiodiolenone synthase] + 5 CO2 + 5 NADP(+) + 5 CoA + 2 H2O. The catalysed reaction is 17-(4-hydroxyphenyl)heptadecanoyl-[(phenol)carboxyphthiodiolenone synthase] + 2 (S)-methylmalonyl-CoA + 3 malonyl-CoA + 5 NADPH + 10 H(+) = C35-(phenol)carboxyphthiodiolenone-[(phenol)carboxyphthiodiolenone synthase] + 5 CO2 + 5 NADP(+) + 5 CoA + 2 H2O. The enzyme catalyses 19-(4-hydroxyphenyl)nonadecanoyl-[(phenol)carboxyphthiodiolenone synthase] + 2 (S)-methylmalonyl-CoA + 3 malonyl-CoA + 5 NADPH + 10 H(+) = C37-(phenol)carboxyphthiodiolenone-[(phenol)carboxyphthiodiolenone synthase] + 5 CO2 + 5 NADP(+) + 5 CoA + 2 H2O. The protein operates within lipid metabolism; fatty acid biosynthesis. Its function is as follows. Part of the PpsABCDE complex involved in the biosynthesis of the lipid core common to phthiocerols and phenolphthiocerols by successive additions of malonyl-CoA or methylmalonyl-CoA extender units. PpsA can accept as substrate the activated forms of either icosanoyl (C20), docosanoyl (C22) or lignoceroyl (C24) groups from FadD26, or a (4-hydroxyphenyl)-C17 or (4-hydroxyphenyl)-C19 fatty acyl from FadD29. PpsA initiates the biosynthesis and extends its substrate using a malonyl-CoA extender unit. The PpsB and PpsC proteins add the second and third malonyl-CoA extender units. PpsD adds an (R)-methylmalonyl unit and PpsE adds a second (R)-methylmalonyl unit. The incorporation of the methylmalonyl units results in formation of two branched methyl groups in the elongated product. The polypeptide is Phenolphthiocerol/phthiocerol polyketide synthase subunit E (ppsE) (Mycobacterium bovis (strain ATCC BAA-935 / AF2122/97)).